The sequence spans 308 residues: GTPase Era (308 aa).

An Era-type G domain is found at 14–181 (RCGFVALIGA…RRALAAAMPE (168 aa)). Residues 22–29 (GAPNVGKS) form a G1 region. Residue 22–29 (GAPNVGKS) participates in GTP binding. A G2 region spans residues 48–52 (QTTRA). Positions 69-72 (DTPG) are G3. Residues 69–73 (DTPGI) and 131–134 (NKID) each bind GTP. Residues 131 to 134 (NKID) form a G4 region. The G5 stretch occupies residues 160–162 (VAA). The KH type-2 domain maps to 212–289 (LHQELPYQST…HLFLFVKVRD (78 aa)).

This sequence belongs to the TRAFAC class TrmE-Era-EngA-EngB-Septin-like GTPase superfamily. Era GTPase family. In terms of assembly, monomer.

Its subcellular location is the cytoplasm. It localises to the cell inner membrane. Functionally, an essential GTPase that binds both GDP and GTP, with rapid nucleotide exchange. Plays a role in 16S rRNA processing and 30S ribosomal subunit biogenesis and possibly also in cell cycle regulation and energy metabolism. The protein is GTPase Era of Afipia carboxidovorans (strain ATCC 49405 / DSM 1227 / KCTC 32145 / OM5) (Oligotropha carboxidovorans).